The sequence spans 224 residues: MKLDLFVYNSQHFVNNITLYQLNHLNSTSFSFIFLSGLFTSLSPCIISILPVCILYIAGETQKLNPINKTKNLFLFCLGTISSFITLGILATLITKTYSQFFNGIPTISAVVIIYMGLNLLNIVHINSPKFNGLVTNNNYNFKMYLSGVGIGIAISSCSTPIFVTLLVWINSTQKIFTGLIFILIYSIGYIFPIIIGSIFSTSFLKLTESLSGIIMAPSVELCY.

Helical transmembrane passes span 32 to 52 (FIFLSGLFTSLSPCIISILPV), 74 to 94 (FLFCLGTISSFITLGILATLI), 104 to 124 (GIPTISAVVIIYMGLNLLNIV), 150 to 170 (GIGIAISSCSTPIFVTLLVWI), and 176 to 196 (IFTGLIFILIYSIGYIFPIII).

This sequence belongs to the DsbD family.

It localises to the plastid. It is found in the chloroplast membrane. Could be involved in cytochrome c synthesis. The chain is Putative cytochrome c-type biogenesis protein DbsD-like from Pyropia yezoensis (Susabi-nori).